The following is a 124-amino-acid chain: Fluoride-specific ion channel FluC (124 aa).

4 consecutive transmembrane segments (helical) span residues 4 to 24, 35 to 55, 62 to 82, and 95 to 115; these read LLFV…MSII, FGTL…YALG, PELK…FSTF, and WFKS…MVYL. Gly-74 and Thr-77 together coordinate Na(+).

The protein belongs to the fluoride channel Fluc/FEX (TC 1.A.43) family.

Its subcellular location is the cell inner membrane. The catalysed reaction is fluoride(in) = fluoride(out). Its activity is regulated as follows. Na(+) is not transported, but it plays an essential structural role and its presence is essential for fluoride channel function. Functionally, fluoride-specific ion channel. Important for reducing fluoride concentration in the cell, thus reducing its toxicity. This chain is Fluoride-specific ion channel FluC, found in Shewanella denitrificans (strain OS217 / ATCC BAA-1090 / DSM 15013).